Consider the following 219-residue polypeptide: RNA-free ribonuclease P (219 aa).

The protein belongs to the HARP family.

The catalysed reaction is Endonucleolytic cleavage of RNA, removing 5'-extranucleotides from tRNA precursor.. Its function is as follows. RNA-free RNase P that catalyzes the removal of the 5'-leader sequence from pre-tRNA to produce the mature 5'-terminus. The chain is RNA-free ribonuclease P from Staphylothermus marinus (strain ATCC 43588 / DSM 3639 / JCM 9404 / F1).